The following is a 224-amino-acid chain: uncharacterized protein (224 aa).

The disordered stretch occupies residues 128-224 (VPSVQLHQIP…TNKRKKRLQF (97 aa)). Positions 129-138 (PSVQLHQIPT) are enriched in polar residues. Basic residues predominate over residues 139–156 (RSRRSSKPRKPRKKRKER). Basic and acidic residues predominate over residues 167–182 (LLREMDRLMTKQRDAL). The span at 185–195 (SESSSYFSSDS) shows a compositional bias: low complexity.

This is an uncharacterized protein from Torque teno sus virus 1 (isolate Sd-TTV31).